A 124-amino-acid polypeptide reads, in one-letter code: Fluoride-specific ion channel FluC (124 aa).

A run of 4 helical transmembrane segments spans residues 4 to 24 (IFYI…TTLV), 35 to 55 (YATF…FGYL), 63 to 83 (PYLK…FSAF), and 96 to 116 (ILIA…ATWT). Residues Gly-75 and Thr-78 each contribute to the Na(+) site.

The protein belongs to the fluoride channel Fluc/FEX (TC 1.A.43) family.

The protein resides in the cell inner membrane. It catalyses the reaction fluoride(in) = fluoride(out). With respect to regulation, na(+) is not transported, but it plays an essential structural role and its presence is essential for fluoride channel function. Fluoride-specific ion channel. Important for reducing fluoride concentration in the cell, thus reducing its toxicity. The chain is Fluoride-specific ion channel FluC from Flavobacterium psychrophilum (strain ATCC 49511 / DSM 21280 / CIP 103535 / JIP02/86).